A 391-amino-acid chain; its full sequence is Elongation factor Tu (391 aa).

The region spanning 10–201 (KPHVNIGTIG…AVDDYIPTPE (192 aa)) is the tr-type G domain. The G1 stretch occupies residues 19–26 (GHVDHGKT). 19 to 26 (GHVDHGKT) provides a ligand contact to GTP. Thr26 contributes to the Mg(2+) binding site. Residues 55-59 (GITIS) form a G2 region. Positions 76–79 (DCPG) are G3. Residues 76 to 80 (DCPGH) and 131 to 134 (NKVD) each bind GTP. Residues 131 to 134 (NKVD) are G4. Positions 169–171 (SAL) are G5.

Belongs to the TRAFAC class translation factor GTPase superfamily. Classic translation factor GTPase family. EF-Tu/EF-1A subfamily. As to quaternary structure, monomer.

It is found in the cytoplasm. It catalyses the reaction GTP + H2O = GDP + phosphate + H(+). Its function is as follows. GTP hydrolase that promotes the GTP-dependent binding of aminoacyl-tRNA to the A-site of ribosomes during protein biosynthesis. The polypeptide is Elongation factor Tu (Paracoccus denitrificans (strain Pd 1222)).